The primary structure comprises 87 residues: U18-myrmicitoxin-Mri1a (87 aa).

The N-terminal stretch at 1–32 (MKNNYNRINTFIVYLMVTFSLISIISITECTP) is a signal peptide. The region spanning 33-77 (NHDPCPPQYAEALCLNGGTCFSVTIMGSDNYNCICAPGFRGWRCQ) is the EGF-like domain. Disulfide bonds link cysteine 37–cysteine 52, cysteine 46–cysteine 65, and cysteine 67–cysteine 76.

Post-translationally, O-glycosylated. As to expression, expressed by the venom gland.

The protein resides in the secreted. This Manica rubida (European giant red ant) protein is U18-myrmicitoxin-Mri1a.